Reading from the N-terminus, the 89-residue chain is uncharacterized protein (89 aa).

The chain crosses the membrane as a helical span at residues 67–86; the sequence is VYLSSMYICFILLAIWMTVW.

Its subcellular location is the membrane. This is an uncharacterized protein from Bacillus subtilis (strain 168).